The primary structure comprises 570 residues: Urease subunit alpha (570 aa).

Ni(2+) is bound by residues His-137, His-139, and Lys-220. The residue at position 220 (Lys-220) is an N6-carboxylysine. His-222 is a binding site for substrate. 2 residues coordinate Ni(2+): His-249 and His-275. The active-site Proton donor is His-323. Asp-363 lines the Ni(2+) pocket.

Belongs to the metallo-dependent hydrolases superfamily. Urease alpha subunit family. In terms of assembly, heterotrimer of UreA (gamma), UreB (beta) and UreC (alpha) subunits. Three heterotrimers associate to form the active enzyme. Requires Ni cation as cofactor. Post-translationally, carboxylation allows a single lysine to coordinate two nickel ions.

It is found in the cytoplasm. It carries out the reaction urea + 2 H2O + H(+) = hydrogencarbonate + 2 NH4(+). Its pathway is nitrogen metabolism; urea degradation; CO(2) and NH(3) from urea (urease route): step 1/1. In Lachnoclostridium phytofermentans (strain ATCC 700394 / DSM 18823 / ISDg) (Clostridium phytofermentans), this protein is Urease subunit alpha.